Reading from the N-terminus, the 374-residue chain is WW domain-binding protein 4 (374 aa).

The segment at 11–42 (KFCDYCKCWIADNRPSVEFHERGKNHKENVAR) adopts a Matrin-type zinc-finger fold. Positions 91–109 (EPTISPVTNTVQPTPTANQ) are enriched in polar residues. Disordered stretches follow at residues 91-126 (EPTI…SKGR) and 188-328 (SKWE…EAGA). Residues 112–121 (EKKKKKKKKE) are compositionally biased toward basic residues. WW domains follow at residues 121–154 (EASK…KPEG) and 162–195 (TAAK…KPDD). Composition is skewed to basic and acidic residues over residues 188 to 197 (SKWEKPDDFI) and 205 to 270 (SSKD…EKTT). Phosphoserine occurs at positions 219, 226, and 228. The segment covering 315 to 325 (STENECLSSSE) has biased composition (polar residues). The interaction with SNRNP200 stretch occupies residues 355-373 (KKRRIENGKSRNLRQRGED).

As to quaternary structure, component of the spliceosome B complex. Associated with U2 snRNPs. Binds splicing factors SNRPB, SNRPC and SF1. Interacts via the WW domains with the Pro-rich domains of KHDRBS1/SAM68. Interacts via the WW domains with the Pro-rich domains of WBP11. Interacts with SNRNP200.

The protein resides in the nucleus. It is found in the nucleus speckle. Involved in pre-mRNA splicing as a component of the spliceosome. May play a role in cross-intron bridging of U1 and U2 snRNPs in the mammalian A complex. The sequence is that of WW domain-binding protein 4 (Wbp4) from Rattus norvegicus (Rat).